Consider the following 540-residue polypeptide: Phenylalanine--tRNA ligase beta subunit (540 aa).

The 76-residue stretch at 268–343 folds into the B5 domain; sequence LQHKSIKITA…ITYGYNNLSP (76 aa). Mg(2+) contacts are provided by aspartate 321, aspartate 327, glutamate 330, and glutamate 331.

Belongs to the phenylalanyl-tRNA synthetase beta subunit family. Type 2 subfamily. As to quaternary structure, tetramer of two alpha and two beta subunits. The cofactor is Mg(2+).

The protein localises to the cytoplasm. The enzyme catalyses tRNA(Phe) + L-phenylalanine + ATP = L-phenylalanyl-tRNA(Phe) + AMP + diphosphate + H(+). The polypeptide is Phenylalanine--tRNA ligase beta subunit (Sulfurisphaera tokodaii (strain DSM 16993 / JCM 10545 / NBRC 100140 / 7) (Sulfolobus tokodaii)).